The chain runs to 287 residues: tRNA N(3)-cytidine methyltransferase METTL6 (287 aa).

Positions 45, 49, 87, 110, 136, 137, and 157 each coordinate S-adenosyl-L-methionine. The segment at arginine 267 to phenylalanine 287 is disordered.

The protein belongs to the methyltransferase superfamily. METL family. Monomer. Interacts with SARS1/SerRS; interaction is mediated via tRNA(Ser) and is required for N(3)-methylcytidine methylation.

Its subcellular location is the cytoplasm. It localises to the nucleus. It carries out the reaction cytidine(32) in tRNA(Ser) + S-adenosyl-L-methionine = N(3)-methylcytidine(32) in tRNA(Ser) + S-adenosyl-L-homocysteine + H(+). S-adenosyl-L-methionine-dependent methyltransferase that mediates N(3)-methylcytidine modification of residue 32 of the tRNA anticodon loop of tRNA(Ser), including tRNA(Ser)(UGA) and tRNA(Ser)(GCU). Interaction with SARS1/SerRS is required for N(3)-methylcytidine methylation. This is tRNA N(3)-cytidine methyltransferase METTL6 (Mettl6) from Rattus norvegicus (Rat).